Reading from the N-terminus, the 141-residue chain is Small ribosomal subunit protein bS6 (141 aa).

The interval 96-141 (VTGPSEMLKAEENRSERRERRERPEHADGAEGDDSNDSDNSDNADE) is disordered. Over residues 103–124 (LKAEENRSERRERRERPEHADG) the composition is skewed to basic and acidic residues. Residues 125 to 141 (AEGDDSNDSDNSDNADE) show a composition bias toward acidic residues.

Belongs to the bacterial ribosomal protein bS6 family.

Binds together with bS18 to 16S ribosomal RNA. The sequence is that of Small ribosomal subunit protein bS6 from Pseudomonas entomophila (strain L48).